We begin with the raw amino-acid sequence, 738 residues long: Wall-associated receptor kinase 4 (738 aa).

A signal peptide spans 1–22 (MKVQRLFLVAIFCLSYMQLVKG). Over 23-335 (QTLPRCPEKC…PKGNPEYVEW (313 aa)) the chain is Extracellular. N-linked (GlcNAc...) asparagine glycans are attached at residues Asn34, Asn56, Asn109, Asn115, Asn132, Asn182, and Asn208. In terms of domain architecture, EGF-like 1 spans 232–278 (RGETCGQVGEKKCGVNGICSNSASGIGYTCKCKGGFQGNPYLQNGCQ). 6 disulfides stabilise this stretch: Cys236/Cys250, Cys244/Cys261, Cys263/Cys277, Cys283/Cys300, Cys294/Cys309, and Cys311/Cys324. Residues 279-325 (DINECTTANPIHKHNCSGDSTCENKLGHFRCNCRSRYELNTTTNTCK) enclose the EGF-like 2; calcium-binding domain. An N-linked (GlcNAc...) asparagine glycan is attached at Asn293. A glycan (N-linked (GlcNAc...) asparagine) is linked at Asn318. A helical membrane pass occupies residues 336-356 (TTIVLGTTIGFLVILLAISCI). Over 357-738 (EHKMKNTKDT…VAILDIEAGR (382 aa)) the chain is Cytoplasmic. Residue Thr399 is modified to Phosphothreonine. One can recognise a Protein kinase domain in the interval 410–693 (YDENRILGQG…RVTKTKHKWS (284 aa)). ATP is bound by residues 416–424 (LGQGGQGTV) and Lys438. At Tyr483 the chain carries Phosphotyrosine. The active-site Proton acceptor is the Asp535. 2 positions are modified to phosphothreonine: Thr569 and Thr574. At Tyr582 the chain carries Phosphotyrosine.

It belongs to the protein kinase superfamily. Ser/Thr protein kinase family. In terms of tissue distribution, strictly expressed in siliques.

Its subcellular location is the membrane. It catalyses the reaction L-seryl-[protein] + ATP = O-phospho-L-seryl-[protein] + ADP + H(+). The enzyme catalyses L-threonyl-[protein] + ATP = O-phospho-L-threonyl-[protein] + ADP + H(+). Serine/threonine-protein kinase that may function as a signaling receptor of extracellular matrix component. Binding to pectin may have significance in the control of cell expansion, morphogenesis and development. This chain is Wall-associated receptor kinase 4 (WAK4), found in Arabidopsis thaliana (Mouse-ear cress).